The sequence spans 61 residues: Large ribosomal subunit protein bL32 (61 aa).

Over residues 1–16 the composition is skewed to basic residues; it reads MAVPKRKTSPSRRGMR. The interval 1–61 is disordered; the sequence is MAVPKRKTSP…RQILKPKAEA (61 aa). Positions 28-44 are enriched in basic and acidic residues; sequence VEDKDSGELRRPHHLDL.

This sequence belongs to the bacterial ribosomal protein bL32 family.

The sequence is that of Large ribosomal subunit protein bL32 from Xanthobacter autotrophicus (strain ATCC BAA-1158 / Py2).